The chain runs to 312 residues: Transcription initiation factor IIB (312 aa).

The TFIIB-type zinc-finger motif lies at F10–G42. Positions 14, 17, 34, and 37 each coordinate Zn(2+). 2 tandem repeats follow at residues F120–P196 and F213–T290.

It belongs to the TFIIB family. In terms of assembly, associates with TFIID-IIA (DA complex) to form TFIID-IIA-IIB (DAB-complex) which is then recognized by polymerase II.

The protein localises to the nucleus. Its function is as follows. General factor that plays a major role in the activation of eukaryotic genes transcribed by RNA polymerase II. The sequence is that of Transcription initiation factor IIB from Encephalitozoon cuniculi (strain GB-M1) (Microsporidian parasite).